Consider the following 219-residue polypeptide: Phosphate-specific transport system accessory protein PhoU homolog (219 aa).

The protein belongs to the PhoU family. Homodimer.

The protein localises to the cytoplasm. Functionally, plays a role in the regulation of phosphate uptake. Encoded together with proteins of the phosphate-specific transport (Pst) system in the polycistronic pstSCAB-phoU operon. The polypeptide is Phosphate-specific transport system accessory protein PhoU homolog (Clostridium acetobutylicum (strain ATCC 824 / DSM 792 / JCM 1419 / IAM 19013 / LMG 5710 / NBRC 13948 / NRRL B-527 / VKM B-1787 / 2291 / W)).